The sequence spans 804 residues: Phenylalanine--tRNA ligase beta subunit (804 aa).

The tRNA-binding domain occupies 39 to 147 (GPSFSNVVVA…PNLPLGEDLA (109 aa)). In terms of domain architecture, B5 spans 402–480 (ETVGEIHLRC…RIHGYDNIPV (79 aa)). Positions 458, 464, 467, and 468 each coordinate Mg(2+). The FDX-ACB domain occupies 711–804 (SRYPESSRDV…IIDQTGARVR (94 aa)).

Belongs to the phenylalanyl-tRNA synthetase beta subunit family. Type 1 subfamily. Tetramer of two alpha and two beta subunits. It depends on Mg(2+) as a cofactor.

The protein localises to the cytoplasm. The enzyme catalyses tRNA(Phe) + L-phenylalanine + ATP = L-phenylalanyl-tRNA(Phe) + AMP + diphosphate + H(+). This chain is Phenylalanine--tRNA ligase beta subunit, found in Syntrophus aciditrophicus (strain SB).